Reading from the N-terminus, the 123-residue chain is Putative membrane protein insertion efficiency factor (123 aa).

Positions 1–23 (MGSCGGKHTGKGAPKPYSRNFTD) are disordered.

The protein belongs to the UPF0161 family.

The protein localises to the cell inner membrane. Could be involved in insertion of integral membrane proteins into the membrane. The chain is Putative membrane protein insertion efficiency factor from Brucella ovis (strain ATCC 25840 / 63/290 / NCTC 10512).